Here is a 386-residue protein sequence, read N- to C-terminus: Acyl-lipid omega-3 desaturase (cytochrome b5), endoplasmic reticulum (386 aa).

Residues 1–30 (MVVAMDQRTNVNGDPGAGDRKKEERFDPSA) form a disordered region. Positions 17–27 (AGDRKKEERFD) are enriched in basic and acidic residues. Residues 63-83 (IIAVAALAIAAVYVDSWFLWP) form a helical membrane-spanning segment. The Histidine box-1 signature appears at 101–105 (HDCGH). Positions 137-141 (HRTHH) match the Histidine box-2 motif. The next 2 helical transmembrane spans lie at 220 to 240 (WSIMFVSLIALSFVFGPLAVL) and 242 to 262 (VYGVPYIIFVMWLDAVTYLHH). Positions 304–308 (HVIHH) match the Histidine box-3 motif.

Belongs to the fatty acid desaturase type 1 family. Abundant in leaves and seedlings. Barely detectable in root tissue.

The protein localises to the endoplasmic reticulum membrane. The catalysed reaction is a (9Z,12Z)-octadecadienoyl-containing glycerolipid + 2 Fe(II)-[cytochrome b5] + O2 + 2 H(+) = (9Z,12Z,15Z)-octadecatrienoyl-containing glycerolipid + 2 Fe(III)-[cytochrome b5] + 2 H2O. Its pathway is lipid metabolism; polyunsaturated fatty acid biosynthesis. Functionally, microsomal (ER) omega-3 fatty acid desaturase introduces the third double bond in the biosynthesis of 18:3 fatty acids, important constituents of plant membranes. It is thought to use cytochrome b5 as an electron donor and to act on fatty acids esterified to phosphatidylcholine and, possibly, other phospholipids. This is Acyl-lipid omega-3 desaturase (cytochrome b5), endoplasmic reticulum from Arabidopsis thaliana (Mouse-ear cress).